A 223-amino-acid polypeptide reads, in one-letter code: Alpha-S2-casein (223 aa).

A signal peptide spans 1-15; the sequence is MKFFIFTCLLAVALA. Phosphoserine occurs at positions 23, 24, 25, 72, 73, 74, 77, 145, 147, 151, and 159. Residues 77 to 141 constitute a repeat; that stretch reads SAEVAPEEIK…AGPFTPTVNR (65 aa). Residues 159 to 223 constitute a repeat; that stretch reads STEVFTKKTK…TNAIPYVRYL (65 aa).

Belongs to the alpha-casein family. In terms of tissue distribution, mammary gland specific. Secreted in milk.

The protein resides in the secreted. Its function is as follows. Important role in the capacity of milk to transport calcium phosphate. The polypeptide is Alpha-S2-casein (CSN1S2) (Capra hircus (Goat)).